A 95-amino-acid polypeptide reads, in one-letter code: Large ribosomal subunit protein eL30 (95 aa).

The protein belongs to the eukaryotic ribosomal protein eL30 family.

The polypeptide is Large ribosomal subunit protein eL30 (Methanospirillum hungatei JF-1 (strain ATCC 27890 / DSM 864 / NBRC 100397 / JF-1)).